We begin with the raw amino-acid sequence, 370 residues long: MSTVTFDQISEHEQVMFCNDPHTGLKAIIAIHNTTLGPALGGCRMLPYKSEEEALTDVLRLSKGMTYKCVAADVDFGGGKAVIIGDPRKDKTPELFRAFGQFVQSLNGRFYTGTDMGTTPEDFVQAYKETSFIVGLPEEYGGNGDSSVTTAFGVMQGLRAVSQFLWGTDVLTERVFAVQGLGKVGFKVAEGLLKEGANVYVTDVDPETIAKLEEKAYQYPGHVQAVTADDIYGVGADVFVPCAIGGIINDETIERLKVKAVCGAANNQLLEDRHGKVLQAKNILYAPDYIVNAGGLIQVSDELYGPNKARVLKKTRALYDTLFEIFQSAEKKAVSTVEAANQFVEERLQKRARLNSFFSPDNPPKWRVRR.

Residue R44 coordinates NAD(+). K68 is an L-phenylalanine binding site. The Proton donor/acceptor role is filled by K80. 114-115 (TD) provides a ligand contact to L-phenylalanine. NAD(+) is bound by residues D115, S146, T150, 180–186 (GLGKVGF), 203–204 (DV), 243–244 (AI), and 264–266 (AAN). N266 contacts L-phenylalanine.

Belongs to the Glu/Leu/Phe/Val dehydrogenases family.

The enzyme catalyses L-phenylalanine + NAD(+) + H2O = 3-phenylpyruvate + NH4(+) + NADH + H(+). The protein operates within amino-acid biosynthesis; L-phenylalanine biosynthesis; L-phenylalanine from phenylpyruvate (PDH route): step 1/1. Its function is as follows. Catalyzes the reversible NAD(+)-dependent oxidative deamination of L-phenylalanine to phenylpyruvate. The protein is Phenylalanine dehydrogenase of Caldalkalibacillus thermarum (strain TA2.A1).